The following is a 462-amino-acid chain: MTKNHKLWGGRFESSLEKWVEEFGASISFDQKLAPYDMKASMAHVTMLGKTDIISQEEAGLIKDGLKILQDKYRAGQLTFSISNEDIHMNIESLLTAEIGEVAGKLHTARSRNDQVATDMHLYLKDKLQEMMKKLLHLRTTLVNLAENHIYTVMPGYTHLQHAQPISFGHHLMAYYNMFTRDTERLEFNMKHTNLSPLGAAALAGTTFPIDRHMTTRLLDFEKPYSNSLDAVSDRDFIIEFLSNASILMMHLSRFCEEIINWCSYEYQFITLSDTFSTGSSIMPQKKNPDMAELIRGKTGRVYGNLFSLLTVMKSLPLAYNKDLQEDKEGMFDSVETVSIAIEIMANMLETMTVNEHIMMTSTETDFSNATELADYLASKGVPFRKAHEIVGKLVLECSKNGSYLQDIPLKYYQEISELIENDIYEILTAKTAVKRRNSLGGTGFDQVKKQILLARKELKAE.

Belongs to the lyase 1 family. Argininosuccinate lyase subfamily.

The protein localises to the cytoplasm. The enzyme catalyses 2-(N(omega)-L-arginino)succinate = fumarate + L-arginine. It functions in the pathway amino-acid biosynthesis; L-arginine biosynthesis; L-arginine from L-ornithine and carbamoyl phosphate: step 3/3. The protein is Argininosuccinate lyase of Streptococcus agalactiae serotype V (strain ATCC BAA-611 / 2603 V/R).